A 340-amino-acid polypeptide reads, in one-letter code: 3-isopropylmalate dehydrogenase (340 aa).

Substrate-binding residues include R88, R98, R122, and D212. 3 residues coordinate Mg(2+): D212, D236, and D240. Position 272-284 (272-284) interacts with NAD(+); it reads GSAPDIAGQGIAD.

This sequence belongs to the isocitrate and isopropylmalate dehydrogenases family. LeuB type 2 subfamily. In terms of assembly, homodimer. It depends on Mg(2+) as a cofactor. Mn(2+) is required as a cofactor.

It localises to the cytoplasm. The catalysed reaction is (2R,3S)-3-isopropylmalate + NAD(+) = 4-methyl-2-oxopentanoate + CO2 + NADH. The protein operates within amino-acid biosynthesis; L-leucine biosynthesis; L-leucine from 3-methyl-2-oxobutanoate: step 3/4. Its function is as follows. Catalyzes the oxidation of 3-carboxy-2-hydroxy-4-methylpentanoate (3-isopropylmalate) to 3-carboxy-4-methyl-2-oxopentanoate. The product decarboxylates to 4-methyl-2 oxopentanoate. The sequence is that of 3-isopropylmalate dehydrogenase (leuB) from Corynebacterium glutamicum (strain ATCC 13032 / DSM 20300 / JCM 1318 / BCRC 11384 / CCUG 27702 / LMG 3730 / NBRC 12168 / NCIMB 10025 / NRRL B-2784 / 534).